The following is a 179-amino-acid chain: ATP-dependent protease subunit HslV (179 aa).

Thr-8 is a catalytic residue. The Na(+) site is built by Gly-163, Cys-166, and Thr-169.

The protein belongs to the peptidase T1B family. HslV subfamily. A double ring-shaped homohexamer of HslV is capped on each side by a ring-shaped HslU homohexamer. The assembly of the HslU/HslV complex is dependent on binding of ATP.

Its subcellular location is the cytoplasm. The catalysed reaction is ATP-dependent cleavage of peptide bonds with broad specificity.. Allosterically activated by HslU binding. In terms of biological role, protease subunit of a proteasome-like degradation complex believed to be a general protein degrading machinery. This is ATP-dependent protease subunit HslV from Solibacter usitatus (strain Ellin6076).